The following is a 5061-amino-acid chain: E3 ubiquitin-protein ligase rnf213-beta (5061 aa).

A compositionally biased stretch (basic residues) spans 1–12 (MTRKRKSGKKGK). Residues 1-334 (MTRKRKSGKK…QRKPSPVRAP (334 aa)) are disordered. Polar residues-rich tracts occupy residues 24 to 52 (GGST…TQKD) and 75 to 87 (SDGS…TNKE). The segment covering 100-110 (LQKKGPQKRKG) has biased composition (basic residues). Composition is skewed to polar residues over residues 127–163 (QTSY…TSAS) and 172–200 (TETV…QPPQ). Basic and acidic residues-rich tracts occupy residues 217 to 229 (KGSE…EESV) and 236 to 289 (LSEI…EEPK). Residues 292 to 301 (AAAAATGKTG) are compositionally biased toward low complexity. A compositionally biased stretch (polar residues) spans 306-322 (EQTNQIEANQDSTMESK). Residues 1923–1928 (AVGKSL), E2023, D2074, K2417, and S2492 each bind ATP. Zn(2+) contacts are provided by C3957, C3960, C3972, H3974, C3977, C3980, C3993, C3996, C4451, and H4455. The RING-type zinc finger occupies 3957–3997 (CRVCLMELSEPFALPCEHVFCRSCLRRSMEREEAQHCPVCR). The RZ-type zinc-finger motif lies at 4429–4501 (MPDDHTSEAK…AYGDYDRTRP (73 aa)). The active-site Nucleophile; for E3 ubiquitin-lipopolysaccharide ligase activity is the C4462. 2 residues coordinate Zn(2+): C4471 and C4474.

This sequence belongs to the AAA ATPase family.

It is found in the cytoplasm. It localises to the cytosol. The protein localises to the lipid droplet. The enzyme catalyses S-ubiquitinyl-[E2 ubiquitin-conjugating enzyme]-L-cysteine + [acceptor protein]-L-lysine = [E2 ubiquitin-conjugating enzyme]-L-cysteine + N(6)-ubiquitinyl-[acceptor protein]-L-lysine.. It catalyses the reaction ATP + H2O = ADP + phosphate + H(+). It participates in protein modification; protein ubiquitination. Atypical E3 ubiquitin ligase that can catalyze ubiquitination of both proteins and lipids, and which is involved in various processes, such as lipid metabolism, angiogenesis and cell-autonomous immunity. Acts as a key immune sensor by catalyzing ubiquitination of the lipid A moiety of bacterial lipopolysaccharide (LPS) via its RZ-type zinc-finger: restricts the proliferation of cytosolic bacteria, such as Salmonella, by generating the bacterial ubiquitin coat through the ubiquitination of LPS. Ubiquitination of LPS triggers cell-autonomous immunity, such as antibacterial autophagy, leading to degradation of the microbial invader. Involved in lipid metabolism by regulating fat storage and lipid droplet formation; act by inhibiting the lipolytic process. Also regulates lipotoxicity by inhibiting desaturation of fatty acids. Also acts as an E3 ubiquitin-protein ligase via its RING-type zinc finger. Involved in the non-canonical Wnt signaling pathway in vascular development: acts by mediating ubiquitination and degradation of proteins downstream of rspo3, leading to inhibit the non-canonical Wnt signaling pathway and promoting vessel regression. Also has ATPase activity; ATPase activity is required for ubiquitination of LPS. The polypeptide is E3 ubiquitin-protein ligase rnf213-beta (rnf213b) (Danio rerio (Zebrafish)).